A 499-amino-acid polypeptide reads, in one-letter code: MAELIIVDFQNISIFILLCLFSFLCYALFFKKPKGFDLPPSPPSLPIIGHLHHLLSSSLPHKSFQKLSFKYGPLLHLRIFNFPMVLVSSASMAYEVFRTNDVNVSYRFVPVNKDSLVFGSSGFVTAPYGDYWKFMKKLISTKLLRPHALELSKGNRAEELRRFCLDLQGKARKKESVEIGKVALKLTNNIICRMSMGRSCSEKNGVAERARELVNKSFALSVKLFFSNMFRKDIMGVSREFDEFLERILVEHEENLEGDQDRDMIDHLLEAYRNEEAEYKITRKQIKSLIVEIFLGGTDSSAQTIQWTMAEILNNPGVLEKLRAEIDSVVGGKRLIQESDLPNLPYLQAVVKEGLRLHPSAPVLLRVFGESCEVKEFYVPEKTTLVVNLYAVNRDPDSWEDPDMFKPERFLVSSISGDEEKIREQAVKYVTFGGGRRTCPAVKLAHIFMETAIGAMVQCFDWRIKGEKVYMEEAVSGLSLKMAHPLKCTPVVRFDPFSF.

Residues 4-24 (LIIVDFQNISIFILLCLFSFL) form a helical membrane-spanning segment. Cys439 contacts heme.

This sequence belongs to the cytochrome P450 family. It depends on heme as a cofactor.

Its subcellular location is the membrane. Functionally, may be involved in hydroxylation of the triterpene marneral. The chain is Cytochrome P450 705A12 from Arabidopsis thaliana (Mouse-ear cress).